Consider the following 1342-residue polypeptide: Zinc finger protein 335 (1342 aa).

Disordered regions lie at residues 1-102 and 201-228; these read MEEN…VTGG and TSTS…AEEP. The span at 34–49 shows a compositional bias: low complexity; sequence AVSADSSDAAAAPGQA. Residues 201–217 show a composition bias toward polar residues; sequence TSTSTCLEAQGGPSSPV. Residues 245–268 form a C2H2-type 1 zinc finger; it reads FKCKMCQYRSSTKATLLRHMRERH. Positions 274 to 442 are disordered; sequence AAAAAAGKKG…TLPRRRGRPS (169 aa). Over residues 297 to 327 the composition is skewed to acidic residues; that stretch reads EEGPEEEDDDDIVDAGAIDDLEEDSDYNPAE. The segment covering 346 to 357 has biased composition (basic residues); that stretch reads RPRRRPGRPRKL. C2H2-type zinc fingers lie at residues 465–487, 495–517, 523–545, 562–584, 590–612, 621–643, 649–672, and 678–701; these read FLCR…VNSH, FKCL…MFNH, YKCD…AAVH, FPCP…MKTH, HMCD…LLTH, FKCE…QLSH, FKCS…AVKH, and FACE…RCRH. Disordered stretches follow at residues 732-763 and 964-1013; these read LKQQ…QSSE and CGGL…SAAT. Over residues 740 to 753 the composition is skewed to pro residues; it reads PGPPPSSPGPPEIP. Residues Ser-976, Ser-992, and Ser-1007 each carry the phosphoserine modification. Positions 986–997 are enriched in low complexity; sequence SQSSASSPPATS. 4 C2H2-type zinc fingers span residues 1019 to 1041, 1047 to 1069, 1075 to 1097, and 1103 to 1126; these read FSCK…KRAH, FKCP…MAQH, HQCS…MLTH, and FACH…QRLH. Lys-1022 is covalently cross-linked (Glycyl lysine isopeptide (Lys-Gly) (interchain with G-Cter in SUMO2)). Positions 1041–1342 are involved in the interaction with CCAR2; sequence HAGPGAFKCP…EYDVITLADD (302 aa). The residue at position 1153 (Ser-1153) is a Phosphoserine.

The protein belongs to the krueppel C2H2-type zinc-finger protein family. In terms of assembly, interacts with NCOA6; may enhance ligand-dependent transcriptional activation by nuclear hormone receptors. Interacts with CNOT6. Interacts with CNOT9; the interaction is direct. Component of a nuclear receptor-mediated transcription complex composed of at least ZNF335, CCAR2 and EMSY; the complex stimulates the transcription of nuclear receptor target genes such as SOX9 and HOXA1. Within the complex interacts with EMSY and interacts (via C-terminus) with CCAR2. Interacts with members of histone H3'Lys4'(H3K4) methyltransferase complexes ASH2L, CXXC1, KMT2A/MLL1, RBBP5, SETD1A and WDR5. Component of a histone methylation complex composed of at least ZNF335, RBBP5, ASH2L and WDR5; the complex may have histone H3-specific methyltransferase activity, however does not have specificity for 'Lys-4' of histone H3. Interacts with RBBP5 and WDR5. Interacts with ASHL2. Components of this complex may associate with components of the ZNF335-CCAR2-EMSY nuclear receptor-mediated transcription complex to form a complex at least composed of ZNF335, HCFC1, CCAR2, EMSY, MKI67, RBBP5, ASH2L and WDR5. Within this complex also interacts with HCFC1 and MKI67. As to expression, ubiquitously expressed.

The protein resides in the nucleus. Its function is as follows. Component or associated component of some histone methyltransferase complexes may regulate transcription through recruitment of those complexes on gene promoters. Enhances ligand-dependent transcriptional activation by nuclear hormone receptors. Plays an important role in neural progenitor cell proliferation and self-renewal through the regulation of specific genes involved brain development, including REST. Also controls the expression of genes involved in somatic development and regulates, for instance, lymphoblast proliferation. In Homo sapiens (Human), this protein is Zinc finger protein 335 (ZNF335).